Reading from the N-terminus, the 86-residue chain is Sec-independent protein translocase protein TatA (86 aa).

Residues 3 to 23 (IFGVGLPEVTVILILALLIFG) form a helical membrane-spanning segment. The tract at residues 56 to 86 (MNEEDESPKSIESNQTNEINQEKIDSENSKK) is disordered. A compositionally biased stretch (polar residues) spans 65–74 (SIESNQTNEI). The segment covering 75-86 (NQEKIDSENSKK) has biased composition (basic and acidic residues).

The protein belongs to the TatA/E family. As to quaternary structure, forms a complex with TatC.

It localises to the cell inner membrane. In terms of biological role, part of the twin-arginine translocation (Tat) system that transports large folded proteins containing a characteristic twin-arginine motif in their signal peptide across membranes. TatA could form the protein-conducting channel of the Tat system. This chain is Sec-independent protein translocase protein TatA, found in Prochlorococcus marinus (strain MIT 9215).